The chain runs to 358 residues: HTH-type transcriptional regulator IpsA (358 aa).

One can recognise an HTH lacI-type domain in the interval 8 to 63; it reads GTLASIAAKLGISRTTVSNAYNRPEQLSAELRQRILDTAEDMGYLGPDPVARSLRT. A DNA-binding region (H-T-H motif) is located at residues 10–29; that stretch reads LASIAAKLGISRTTVSNAYN.

Homodimer.

Its activity is regulated as follows. Myo-inositol causes the dissociation of the IpsA-DNA complex in vitro. Plays a role in the regulation of cell wall biogenesis. Inositol-dependent transcriptional activator of ino1, which encodes inositol phosphate synthase. Also regulates other target genes, which are most likely involved in the synthesis of inositol-derived cell wall components and mycothiol. Acts by binding to a conserved palindromic motif within the promoter regions. The polypeptide is HTH-type transcriptional regulator IpsA (Corynebacterium glutamicum (strain ATCC 13032 / DSM 20300 / JCM 1318 / BCRC 11384 / CCUG 27702 / LMG 3730 / NBRC 12168 / NCIMB 10025 / NRRL B-2784 / 534)).